Here is a 131-residue protein sequence, read N- to C-terminus: Small ribosomal subunit protein bS6 (131 aa).

The disordered stretch occupies residues 100 to 131 (SPMVKAKDERRERREDFANETSDDADAGDSEE). The span at 104-116 (KAKDERRERREDF) shows a compositional bias: basic and acidic residues. Positions 120-131 (TSDDADAGDSEE) are enriched in acidic residues.

It belongs to the bacterial ribosomal protein bS6 family.

Binds together with bS18 to 16S ribosomal RNA. The chain is Small ribosomal subunit protein bS6 from Erwinia tasmaniensis (strain DSM 17950 / CFBP 7177 / CIP 109463 / NCPPB 4357 / Et1/99).